The chain runs to 195 residues: Xanthine phosphoribosyltransferase (195 aa).

Residues Leu-20 and Asn-27 each coordinate xanthine. 128-132 (ANGQA) is a binding site for 5-phospho-alpha-D-ribose 1-diphosphate. Lys-156 contributes to the xanthine binding site.

It belongs to the purine/pyrimidine phosphoribosyltransferase family. Xpt subfamily. As to quaternary structure, homodimer.

It is found in the cytoplasm. The catalysed reaction is XMP + diphosphate = xanthine + 5-phospho-alpha-D-ribose 1-diphosphate. The protein operates within purine metabolism; XMP biosynthesis via salvage pathway; XMP from xanthine: step 1/1. Its function is as follows. Converts the preformed base xanthine, a product of nucleic acid breakdown, to xanthosine 5'-monophosphate (XMP), so it can be reused for RNA or DNA synthesis. This Lactiplantibacillus plantarum (strain ATCC BAA-793 / NCIMB 8826 / WCFS1) (Lactobacillus plantarum) protein is Xanthine phosphoribosyltransferase.